An 877-amino-acid chain; its full sequence is ABC transporter A family member 1 (877 aa).

Helical transmembrane passes span 46–66, 268–288, 324–344, 347–367, 379–399, 420–440, and 479–499; these read YFST…LFLI, VWGG…LLYK, ILIS…FFLG, FFVL…VAFF, IGIG…FSGM, IILF…IGNV, and LLAL…IIPG. An ABC transporter domain is found at 552–788; that stretch reads LIICGLSKSY…YGEGYSVNIV (237 aa). Position 591–598 (591–598) interacts with ATP; sequence GSNGCGKS.

It belongs to the ABC transporter superfamily. ABCA family.

It is found in the membrane. The protein is ABC transporter A family member 1 (abcA1) of Dictyostelium discoideum (Social amoeba).